A 377-amino-acid polypeptide reads, in one-letter code: Probable riboflavin import permease protein RfuC (377 aa).

Transmembrane regions (helical) follow at residues 4–24 (VINSCIAVLLGVAVMSAVIVL), 49–69 (ALFHKAGLFVCMALGASCALK), 72–92 (MINLGGDGQIYAAGFVTALLL), 98–118 (VGFLLQWSVALLCALSVAGIL), 135–155 (ITSFLLSTACVPLIDALIITV), 182–202 (FGVPAVLTYASLVALAVGCFF), 223–245 (FVGFPVWATYVWGMVLSGALFGL), 249–268 (FSVVGLFGTCYVGFSVGMGY), 274–294 (ALIAHAHITVLVPLAFFFAWM), and 303–323 (LGAHLTVNVVLFLQAAIFLLI).

Belongs to the binding-protein-dependent transport system permease family. In terms of assembly, the complex is probably composed of two ATP-binding proteins (RfuB), two transmembrane proteins (RfuC and RfuD) and a solute-binding protein (RfuA).

It is found in the cell inner membrane. In terms of biological role, probably part of the ABC transporter complex RfuABCD involved in riboflavin import. Probably responsible for the translocation of the substrate across the membrane. In Treponema pallidum (strain Nichols), this protein is Probable riboflavin import permease protein RfuC.